A 1273-amino-acid chain; its full sequence is ABC transporter B family member 2 (1273 aa).

The signal sequence occupies residues M1–P30. 7 helical membrane-spanning segments follow: residues F66–I86, V91–F111, F126–H146, F209–S229, I230–A250, G305–F325, and L345–V365. The ABC transmembrane type-1 1 domain occupies M77–R366. In terms of domain architecture, ABC transporter 1 spans I401–R637. Residue G436–S443 participates in ATP binding. N466 and N651 each carry an N-linked (GlcNAc...) asparagine glycan. The region spanning G710–K997 is the ABC transmembrane type-1 2 domain. A run of 2 helical transmembrane segments spans residues V711–V731 and I752–I772. N-linked (GlcNAc...) asparagine glycosylation is present at N806. The next 3 helical transmembrane spans lie at I832 to W852, I934 to L954, and F975 to L995. One can recognise an ABC transporter 2 domain in the interval I1030 to S1266. G1065 to S1072 is an ATP binding site. N1217 and N1256 each carry an N-linked (GlcNAc...) asparagine glycan.

Belongs to the ABC transporter superfamily. ABCB family. Multidrug resistance exporter (TC 3.A.1.201) subfamily. As to quaternary structure, interacts with 1-naphthylphthalamic acid (NPA).

The protein resides in the membrane. The protein is ABC transporter B family member 2 (ABCB2) of Arabidopsis thaliana (Mouse-ear cress).